The primary structure comprises 89 residues: Small ribosomal subunit protein uS14A (89 aa).

This sequence belongs to the universal ribosomal protein uS14 family. Contacts proteins S3 and S10. Part of the 30S ribosomal subunit.

Its function is as follows. Binds 16S rRNA, required for the assembly of 30S particles and may also be responsible for determining the conformation of the 16S rRNA at the A site. Functionally, non-essential protein. A second form of uS14, it can integrate into the 30S subunit where it partially compensates for loss of the major uS14 protein (AC P12878) in restoring 70S formation, although it does not seem to be incorporated into the ribosome as well as the major uS14. The chain is Small ribosomal subunit protein uS14A from Bacillus subtilis (strain 168).